A 159-amino-acid chain; its full sequence is Urease accessory protein UreE (159 aa).

It belongs to the UreE family.

The protein resides in the cytoplasm. Functionally, involved in urease metallocenter assembly. Binds nickel. Probably functions as a nickel donor during metallocenter assembly. The sequence is that of Urease accessory protein UreE from Vibrio parahaemolyticus.